A 259-amino-acid chain; its full sequence is Proteasome subunit alpha 1 (259 aa).

Residues 231-259 (LVPAEPAAASESAPEPKPDTETKPADTQD) are disordered. Over residues 233-243 (PAEPAAASESA) the composition is skewed to low complexity. Basic and acidic residues predominate over residues 244-259 (PEPKPDTETKPADTQD).

The protein belongs to the peptidase T1A family. As to quaternary structure, the 20S proteasome core is composed of 14 alpha and 14 beta subunits that assemble into four stacked heptameric rings, resulting in a barrel-shaped structure. The two inner rings, each composed of seven catalytic beta subunits, are sandwiched by two outer rings, each composed of seven alpha subunits. All four combinations of alpha- and beta-subunits (beta2-alpha1, beta2-alpha2, beta1-alpha2 and beta1-alpha1) yield fully assembled and proteolytically active proteasomes. The catalytic chamber with the active sites is on the inside of the barrel. Has probably a gated structure, the ends of the cylinder being occluded by the N-termini of the alpha-subunits. Is likely capped by the proteasome-associated ATPase, ARC. In terms of processing, the N-terminus is blocked.

Its subcellular location is the cytoplasm. Its pathway is protein degradation; proteasomal Pup-dependent pathway. With respect to regulation, the formation of the proteasomal ATPase ARC-20S proteasome complex, likely via the docking of the C-termini of ARC into the intersubunit pockets in the alpha-rings, may trigger opening of the gate for substrate entry. Interconversion between the open-gate and close-gate conformations leads to a dynamic regulation of the 20S proteasome proteolysis activity. Functionally, component of the proteasome core, a large protease complex with broad specificity involved in protein degradation. The R.erythropolis proteasomes are able to cleave oligopeptides after Tyr, Phe and Leu, very poorly after Arg but not after Glu. Thus, displays chymotrypsin-like activity, low trypsin-like activity but no caspase-like activity. The polypeptide is Proteasome subunit alpha 1 (Rhodococcus erythropolis (Arthrobacter picolinophilus)).